The chain runs to 273 residues: Probable ribosomal RNA small subunit methyltransferase A (273 aa).

Asparagine 26, leucine 28, glycine 53, glutamate 74, aspartate 98, and asparagine 113 together coordinate S-adenosyl-L-methionine.

Belongs to the class I-like SAM-binding methyltransferase superfamily. rRNA adenine N(6)-methyltransferase family. RsmA subfamily.

Its subcellular location is the cytoplasm. In terms of biological role, specifically dimethylates two adjacent adenosines in the loop of a conserved hairpin near the 3'-end of 16S rRNA in the 30S particle. May play a critical role in biogenesis of 30S subunits. This Methanothermobacter thermautotrophicus (strain ATCC 29096 / DSM 1053 / JCM 10044 / NBRC 100330 / Delta H) (Methanobacterium thermoautotrophicum) protein is Probable ribosomal RNA small subunit methyltransferase A.